The chain runs to 389 residues: MTNFPKTVMLLGSGELGKEVAIAAQRLGCHVIACDRYADAPAMQVADQAEVLTMTDPNALKTVVNKHQPDVLIPEIEALAVDALQALEDTGICVIPTARATAVTMNRDRIRNLAAGELGLRTARFAYASDAQELQRAAAPLGWPVVVKPVMSSSGKGQSVVHSAAELDKAWEIAMAGARGSSAQVIVEEFLDFDLEITLLTIRQHDGTTLFCPPIGHQQANGDYQCSWQPASISPSQLQQAQTMARTVTDNLGGAGLFGVEFFLCGDEVVFSELSPRPHDTGLVTLISQNLSEFDLHLRAVLGLPIPSITAADAAASRVILAESQGHHVQFSGVEQALTEPDTNLLLFGKREARPGRRMGVALARGTQINEALAKADRCAAAVKVQVMD.

Residues 15-16 (EL) and Glu-75 each bind N(1)-(5-phospho-beta-D-ribosyl)glycinamide. ATP is bound by residues Arg-107, Lys-148, 153-158 (SSGKGQ), 188-191 (EEFL), and Glu-196. One can recognise an ATP-grasp domain in the interval 112 to 302 (NLAAGELGLR…EFDLHLRAVL (191 aa)). The Mg(2+) site is built by Glu-261 and Glu-273. Residues Asp-280, Lys-350, and 357 to 358 (RR) contribute to the N(1)-(5-phospho-beta-D-ribosyl)glycinamide site.

Belongs to the PurK/PurT family. As to quaternary structure, homodimer.

It carries out the reaction N(1)-(5-phospho-beta-D-ribosyl)glycinamide + formate + ATP = N(2)-formyl-N(1)-(5-phospho-beta-D-ribosyl)glycinamide + ADP + phosphate + H(+). The protein operates within purine metabolism; IMP biosynthesis via de novo pathway; N(2)-formyl-N(1)-(5-phospho-D-ribosyl)glycinamide from N(1)-(5-phospho-D-ribosyl)glycinamide (formate route): step 1/1. Involved in the de novo purine biosynthesis. Catalyzes the transfer of formate to 5-phospho-ribosyl-glycinamide (GAR), producing 5-phospho-ribosyl-N-formylglycinamide (FGAR). Formate is provided by PurU via hydrolysis of 10-formyl-tetrahydrofolate. The protein is Formate-dependent phosphoribosylglycinamide formyltransferase of Synechococcus sp. (strain CC9311).